Consider the following 382-residue polypeptide: Alkane 1-monooxygenase 2 (382 aa).

A run of 4 helical transmembrane segments spans residues 17 to 37 (GYLAFWAIMVPLVPFSAFVGV), 45 to 65 (WAWFMYAFIFGIIPVLDYLVG), 88 to 108 (VSAIAMGFVWIAVLFYAGHIF), and 114 to 134 (GLLGKIGWIVSIGTVGGIIAI). Positions 138, 142, 168, 172, and 173 each coordinate Fe cation. Residues 236–256 (ALFAATFGLLWGWQGVVFFLG) traverse the membrane as a helical segment. His312, His315, and His316 together coordinate Fe cation.

It belongs to the fatty acid desaturase type 1 family. AlkB subfamily. It depends on Fe(3+) as a cofactor.

The protein localises to the cell inner membrane. It catalyses the reaction octane + 2 reduced [rubredoxin] + O2 + 2 H(+) = 2 oxidized [rubredoxin] + octan-1-ol + H2O. Its pathway is hydrocarbon metabolism; alkane degradation. Its function is as follows. Catalyzes the hydroxylation of n-alkanes in the presence of a NADH-rubredoxin reductase and rubredoxin. It preferably hydroxylases C8-C16 hydrocarbons. This Alcanivorax borkumensis (strain ATCC 700651 / DSM 11573 / NCIMB 13689 / SK2) protein is Alkane 1-monooxygenase 2 (alkB2).